The primary structure comprises 158 residues: Transcription elongation factor GreA (158 aa).

Residues 10–75 (TKEGKEKLEQ…QMLENMIRNA (66 aa)) adopt a coiled-coil conformation.

Belongs to the GreA/GreB family.

Its function is as follows. Necessary for efficient RNA polymerase transcription elongation past template-encoded arresting sites. The arresting sites in DNA have the property of trapping a certain fraction of elongating RNA polymerases that pass through, resulting in locked ternary complexes. Cleavage of the nascent transcript by cleavage factors such as GreA or GreB allows the resumption of elongation from the new 3'terminus. GreA releases sequences of 2 to 3 nucleotides. The sequence is that of Transcription elongation factor GreA from Geobacillus kaustophilus (strain HTA426).